Reading from the N-terminus, the 178-residue chain is Inner membrane-spanning protein YciB (178 aa).

The next 5 membrane-spanning stretches (helical) occupy residues 10 to 30 (IVLFFGSYKLYGIYVATAVLM), 47 to 67 (LQTMHKVTLALILSFGALTLA), 76 to 96 (WKPTVLYGAMSVALALTLWAL), 121 to 141 (WAWIAYCAFMSAINAYVVLHW), and 151 to 171 (LWGYVFPLVFLIGQGLYIAPH).

This sequence belongs to the YciB family.

The protein resides in the cell inner membrane. Its function is as follows. Plays a role in cell envelope biogenesis, maintenance of cell envelope integrity and membrane homeostasis. The sequence is that of Inner membrane-spanning protein YciB from Verminephrobacter eiseniae (strain EF01-2).